A 122-amino-acid chain; its full sequence is Large ribosomal subunit protein uL14 (122 aa).

Belongs to the universal ribosomal protein uL14 family. In terms of assembly, part of the 50S ribosomal subunit. Forms a cluster with proteins L3 and L19. In the 70S ribosome, L14 and L19 interact and together make contacts with the 16S rRNA in bridges B5 and B8.

Functionally, binds to 23S rRNA. Forms part of two intersubunit bridges in the 70S ribosome. This is Large ribosomal subunit protein uL14 from Nautilia profundicola (strain ATCC BAA-1463 / DSM 18972 / AmH).